The following is a 119-amino-acid chain: Integration host factor subunit alpha (119 aa).

The interval 96–119 (INGQQGSGKMNGEASHEQLSAEPE) is disordered.

It belongs to the bacterial histone-like protein family. As to quaternary structure, heterodimer of an alpha and a beta chain.

Functionally, this protein is one of the two subunits of integration host factor, a specific DNA-binding protein that functions in genetic recombination as well as in transcriptional and translational control. In Bradyrhizobium sp. (strain BTAi1 / ATCC BAA-1182), this protein is Integration host factor subunit alpha.